The chain runs to 385 residues: Putative nickel insertion protein (385 aa).

Belongs to the LarC family.

This chain is Putative nickel insertion protein, found in Geobacter sp. (strain M21).